The following is a 393-amino-acid chain: Isocitrate dehydrogenase [NAD] subunit gamma, mitochondrial (393 aa).

Residues 1–39 (MALKVATVAGSAAKAVLGPALLCRPWEVLGAHEVPSRNI) constitute a mitochondrion transit peptide. The citrate site is built by threonine 120 and asparagine 133. Substrate is bound by residues arginine 136, arginine 167, and aspartate 254. Residue aspartate 254 coordinates Mn(2+). Asparagine 312, threonine 313, and asparagine 324 together coordinate ADP.

It belongs to the isocitrate and isopropylmalate dehydrogenases family. In terms of assembly, heterooligomer of subunits alpha (IDH3A), beta (IDH3B), and gamma (IDH3G) in the apparent ratio of 2:1:1. The heterodimer containing one IDH3A and one IDH3B subunit and the heterodimer containing one IDH3A and one IDH3G subunit assemble into a heterotetramer (which contains two subunits of IDH3A, one of IDH3B and one of IDH3G) and further into the heterooctamer. The cofactor is Mg(2+). It depends on Mn(2+) as a cofactor.

The protein resides in the mitochondrion. Its activity is regulated as follows. The heterotetramer and the heterodimer composed of IDH3A and IDH3G subunits can be allosterically activated by citrate (CIT) or/and ADP, and the two activators can act independently or synergistically. The heterodimer composed of IDH3A and IDH3B subunits cannot be allosterically regulated and the allosteric regulation of the heterotetramer is through the IDH3G subunit and not the IDH3B subunit. The IDH3G subunit contains the allosteric site which consists of a CIT-binding site and an ADP-binding site, and the binding of CIT and ADP causes conformational changes at the allosteric site which are transmitted to the active site in the catalytic subunit (IDH3A) through a cascade of conformational changes at the heterodimer interface, leading to stabilization of the isocitrate-binding at the active site and thus activation of the enzyme. ATP can activate the heterotetramer and the heterodimer composed of IDH3A and IDH3G subunits at low concentrations but inhibits their activities at high concentrations, whereas ATP exhibits only inhibitory effect on the heterodimer composed of IDH3A and IDH3B subunits. In terms of biological role, regulatory subunit which plays a role in the allosteric regulation of the enzyme catalyzing the decarboxylation of isocitrate (ICT) into alpha-ketoglutarate. The heterodimer composed of the alpha (IDH3A) and beta (IDH3B) subunits and the heterodimer composed of the alpha (IDH3A) and gamma (IDH3G) subunits, have considerable basal activity but the full activity of the heterotetramer (containing two subunits of IDH3A, one of IDH3B and one of IDH3G) requires the assembly and cooperative function of both heterodimers. This chain is Isocitrate dehydrogenase [NAD] subunit gamma, mitochondrial (IDH3G), found in Homo sapiens (Human).